The chain runs to 291 residues: Methylsterol monooxygenase 1 (291 aa).

2 consecutive transmembrane segments (helical) span residues 55–75 (LIVH…FQFL) and 100–120 (MLLF…YYFT). One can recognise a Fatty acid hydroxylase domain in the interval 145 to 274 (CAVIEDTWHY…FTWWDRLFDT (130 aa)). Residues 157–161 (HRALH) carry the Histidine box-1 motif. The short motif at 170–174 (HKVHH) is the Histidine box-2 element. Residues 199 to 219 (FFIGTMVFCNHMILLWAWVTF) traverse the membrane as a helical segment. The Histidine box-3 motif lies at 249–255 (FHDFHHM).

The protein belongs to the sterol desaturase family. The cofactor is Fe cation.

The protein resides in the endoplasmic reticulum membrane. The enzyme catalyses 4,4-dimethyl-5alpha-cholest-7-en-3beta-ol + 6 Fe(II)-[cytochrome b5] + 3 O2 + 5 H(+) = 4alpha-carboxy-4beta-methyl-5alpha-cholest-7-ene-3beta-ol + 6 Fe(III)-[cytochrome b5] + 4 H2O. It functions in the pathway steroid biosynthesis; zymosterol biosynthesis; zymosterol from lanosterol: step 3/6. Its function is as follows. Catalyzes the first step in the removal of the two C-4 methyl groups of 4,4-dimethylzymosterol. This is Methylsterol monooxygenase 1 (msmo1) from Danio rerio (Zebrafish).